Reading from the N-terminus, the 658-residue chain is Integrator complex subunit 9 (658 aa).

A Glycyl lysine isopeptide (Lys-Gly) (interchain with G-Cter in SUMO2) cross-link involves residue K58. Residues D548–N572 form a disordered region. The short motif at K566 to R570 is the Nuclear localization signal element.

Belongs to the metallo-beta-lactamase superfamily. RNA-metabolizing metallo-beta-lactamase-like family. INTS9 subfamily. In terms of assembly, component of the Integrator complex, composed of core subunits INTS1, INTS2, INTS3, INTS4, INTS5, INTS6, INTS7, INTS8, INTS9/RC74, INTS10, INTS11/CPSF3L, INTS12, INTS13, INTS14 and INTS15. The core complex associates with protein phosphatase 2A subunits PPP2CA and PPP2R1A, to form the Integrator-PP2A (INTAC) complex. INTS9 is part of the RNA endonuclease subcomplex, composed of INTS4, INTS9, INTS11 and inositol hexakisphosphate (InsP6). Interacts with WDR73; interaction is required for the assembly of the RNA endonuclease subcomplex in the cytoplasm. Interacts with BRAT1; interaction is required for the assembly of the RNA endonuclease subcomplex. Interacts with ESRRB, ESRRB is not a core component of the Integrator complex and this association is a bridge for the interaction with the multiprotein complex Integrator; attracts the transcriptional machinery.

It localises to the nucleus. Its subcellular location is the cytoplasm. Its function is as follows. Component of the integrator complex, a multiprotein complex that terminates RNA polymerase II (Pol II) transcription in the promoter-proximal region of genes. The integrator complex provides a quality checkpoint during transcription elongation by driving premature transcription termination of transcripts that are unfavorably configured for transcriptional elongation: the complex terminates transcription by (1) catalyzing dephosphorylation of the C-terminal domain (CTD) of Pol II subunit POLR2A/RPB1 and SUPT5H/SPT5, (2) degrading the exiting nascent RNA transcript via endonuclease activity and (3) promoting the release of Pol II from bound DNA. The integrator complex is also involved in terminating the synthesis of non-coding Pol II transcripts, such as enhancer RNAs (eRNAs), small nuclear RNAs (snRNAs), telomerase RNAs and long non-coding RNAs (lncRNAs). Mediates recruitment of cytoplasmic dynein to the nuclear envelope, probably as component of the integrator complex. In Mus musculus (Mouse), this protein is Integrator complex subunit 9 (Ints9).